A 205-amino-acid chain; its full sequence is Arginine exporter protein ArgO (205 aa).

Helical transmembrane passes span 1–21 (MLAV…PLGP), 42–62 (LCAL…SALL), 67–87 (LLLA…GWGA), 111–131 (ILVT…DTFV), 147–167 (WFAL…ALLA), and 185–205 (LFVG…GFGL).

The protein belongs to the LysE/ArgO transporter (TC 2.A.75) family.

It localises to the cell inner membrane. The catalysed reaction is L-arginine(in) = L-arginine(out). Functionally, involved in the export of arginine. Important to control the intracellular level of arginine and the correct balance between arginine and lysine. This Yersinia pseudotuberculosis serotype IB (strain PB1/+) protein is Arginine exporter protein ArgO.